The chain runs to 268 residues: Tryptophan synthase alpha chain (268 aa).

Residues E49 and D60 each act as proton acceptor in the active site.

Belongs to the TrpA family. Tetramer of two alpha and two beta chains.

The catalysed reaction is (1S,2R)-1-C-(indol-3-yl)glycerol 3-phosphate + L-serine = D-glyceraldehyde 3-phosphate + L-tryptophan + H2O. Its pathway is amino-acid biosynthesis; L-tryptophan biosynthesis; L-tryptophan from chorismate: step 5/5. Functionally, the alpha subunit is responsible for the aldol cleavage of indoleglycerol phosphate to indole and glyceraldehyde 3-phosphate. In Xanthomonas euvesicatoria pv. vesicatoria (strain 85-10) (Xanthomonas campestris pv. vesicatoria), this protein is Tryptophan synthase alpha chain.